The following is a 263-amino-acid chain: Endonuclease 8 (263 aa).

Pro2 functions as the Schiff-base intermediate with DNA in the catalytic mechanism. Glu3 (proton donor) is an active-site residue. Lys53 (proton donor; for beta-elimination activity) is an active-site residue. The DNA site is built by Gln70, Arg125, and Asn169. The FPG-type zinc finger occupies 229–263 (KVFHRDGEPCERCGSIIEKTTLSSRPFYWCPGCQH). Arg253 serves as the catalytic Proton donor; for delta-elimination activity.

This sequence belongs to the FPG family. Requires Zn(2+) as cofactor.

It carries out the reaction 2'-deoxyribonucleotide-(2'-deoxyribose 5'-phosphate)-2'-deoxyribonucleotide-DNA = a 3'-end 2'-deoxyribonucleotide-(2,3-dehydro-2,3-deoxyribose 5'-phosphate)-DNA + a 5'-end 5'-phospho-2'-deoxyribonucleoside-DNA + H(+). Functionally, involved in base excision repair of DNA damaged by oxidation or by mutagenic agents. Acts as a DNA glycosylase that recognizes and removes damaged bases. Has a preference for oxidized pyrimidines, such as thymine glycol, 5,6-dihydrouracil and 5,6-dihydrothymine. Has AP (apurinic/apyrimidinic) lyase activity and introduces nicks in the DNA strand. Cleaves the DNA backbone by beta-delta elimination to generate a single-strand break at the site of the removed base with both 3'- and 5'-phosphates. This Escherichia coli O9:H4 (strain HS) protein is Endonuclease 8.